The primary structure comprises 395 residues: Ribosomal RNA large subunit methyltransferase I (395 aa).

In terms of domain architecture, PUA spans Ser2–Phe79.

Belongs to the methyltransferase superfamily. RlmI family.

It localises to the cytoplasm. The enzyme catalyses cytidine(1962) in 23S rRNA + S-adenosyl-L-methionine = 5-methylcytidine(1962) in 23S rRNA + S-adenosyl-L-homocysteine + H(+). Its function is as follows. Specifically methylates the cytosine at position 1962 (m5C1962) of 23S rRNA. The sequence is that of Ribosomal RNA large subunit methyltransferase I from Pseudoalteromonas atlantica (strain T6c / ATCC BAA-1087).